The chain runs to 214 residues: Thiamine import ATP-binding protein ThiQ (214 aa).

An ABC transporter domain is found at I2–I212. G31–S38 serves as a coordination point for ATP.

Belongs to the ABC transporter superfamily. Thiamine importer (TC 3.A.1.19.1) family. In terms of assembly, the complex is composed of two ATP-binding proteins (ThiQ), two transmembrane proteins (ThiP) and a solute-binding protein (ThiB).

The protein localises to the cell inner membrane. It carries out the reaction thiamine(out) + ATP + H2O = thiamine(in) + ADP + phosphate + H(+). In terms of biological role, part of the ABC transporter complex ThiBPQ involved in thiamine import. Responsible for energy coupling to the transport system. The polypeptide is Thiamine import ATP-binding protein ThiQ (Histophilus somni (strain 129Pt) (Haemophilus somnus)).